Here is a 323-residue protein sequence, read N- to C-terminus: Beta-ketoacyl-[acyl-carrier-protein] synthase III (323 aa).

Residues Cys113 and His250 contribute to the active site. An ACP-binding region spans residues 251-255 (QANKR). Residue Asn280 is part of the active site.

This sequence belongs to the thiolase-like superfamily. FabH family. In terms of assembly, homodimer.

Its subcellular location is the cytoplasm. It catalyses the reaction malonyl-[ACP] + acetyl-CoA + H(+) = 3-oxobutanoyl-[ACP] + CO2 + CoA. It functions in the pathway lipid metabolism; fatty acid biosynthesis. Functionally, catalyzes the condensation reaction of fatty acid synthesis by the addition to an acyl acceptor of two carbons from malonyl-ACP. Catalyzes the first condensation reaction which initiates fatty acid synthesis and may therefore play a role in governing the total rate of fatty acid production. Possesses both acetoacetyl-ACP synthase and acetyl transacylase activities. Its substrate specificity determines the biosynthesis of branched-chain and/or straight-chain of fatty acids. This Brucella canis (strain ATCC 23365 / NCTC 10854 / RM-666) protein is Beta-ketoacyl-[acyl-carrier-protein] synthase III.